The following is a 119-amino-acid chain: MSQIDKASRRQKIKDRSRVKVHGTMAKPRLCVYRSLSQIYAQLIDDDNGKTIMAVSSMSKENKALEGTKSEVCTVVGKQLAEMALAKGITTVVFDRNGFRYHGRLKALAEGAREAGLVF.

The interval 1–20 (MSQIDKASRRQKIKDRSRVK) is disordered. The span at 9 to 20 (RRQKIKDRSRVK) shows a compositional bias: basic residues.

It belongs to the universal ribosomal protein uL18 family. Part of the 50S ribosomal subunit; part of the 5S rRNA/L5/L18/L25 subcomplex. Contacts the 5S and 23S rRNAs.

Functionally, this is one of the proteins that bind and probably mediate the attachment of the 5S RNA into the large ribosomal subunit, where it forms part of the central protuberance. In Chlorobium phaeobacteroides (strain DSM 266 / SMG 266 / 2430), this protein is Large ribosomal subunit protein uL18.